Consider the following 650-residue polypeptide: DNA gyrase subunit B (650 aa).

Residues 429 to 543 form the Toprim domain; it reads NELFIVEGDS…AGYVYIAQPP (115 aa). Mg(2+)-binding residues include Glu435, Asp508, and Asp510.

The protein belongs to the type II topoisomerase GyrB family. In terms of assembly, heterotetramer, composed of two GyrA and two GyrB chains. In the heterotetramer, GyrA contains the active site tyrosine that forms a transient covalent intermediate with DNA, while GyrB binds cofactors and catalyzes ATP hydrolysis. Mg(2+) is required as a cofactor. Requires Mn(2+) as cofactor. It depends on Ca(2+) as a cofactor.

The protein resides in the cytoplasm. It catalyses the reaction ATP-dependent breakage, passage and rejoining of double-stranded DNA.. Functionally, a type II topoisomerase that negatively supercoils closed circular double-stranded (ds) DNA in an ATP-dependent manner to modulate DNA topology and maintain chromosomes in an underwound state. Negative supercoiling favors strand separation, and DNA replication, transcription, recombination and repair, all of which involve strand separation. Also able to catalyze the interconversion of other topological isomers of dsDNA rings, including catenanes and knotted rings. Type II topoisomerases break and join 2 DNA strands simultaneously in an ATP-dependent manner. This is DNA gyrase subunit B from Streptococcus pyogenes serotype M18 (strain MGAS8232).